The chain runs to 177 residues: UPF0114 protein jhp_0175 (177 aa).

Helical transmembrane passes span 15-35 (WLLA…GYVF), 54-74 (LVLS…VLMV), and 145-165 (PIFW…LTAV).

It belongs to the UPF0114 family.

It is found in the cell membrane. The sequence is that of UPF0114 protein jhp_0175 from Helicobacter pylori (strain J99 / ATCC 700824) (Campylobacter pylori J99).